The sequence spans 414 residues: Serine hydroxymethyltransferase (414 aa).

Residues leucine 121 and glycine 125–leucine 127 each bind (6S)-5,6,7,8-tetrahydrofolate. Lysine 229 bears the N6-(pyridoxal phosphate)lysine mark.

It belongs to the SHMT family. In terms of assembly, homodimer. Pyridoxal 5'-phosphate is required as a cofactor.

The protein localises to the cytoplasm. It catalyses the reaction (6R)-5,10-methylene-5,6,7,8-tetrahydrofolate + glycine + H2O = (6S)-5,6,7,8-tetrahydrofolate + L-serine. Its pathway is one-carbon metabolism; tetrahydrofolate interconversion. It functions in the pathway amino-acid biosynthesis; glycine biosynthesis; glycine from L-serine: step 1/1. Its function is as follows. Catalyzes the reversible interconversion of serine and glycine with tetrahydrofolate (THF) serving as the one-carbon carrier. This reaction serves as the major source of one-carbon groups required for the biosynthesis of purines, thymidylate, methionine, and other important biomolecules. Also exhibits THF-independent aldolase activity toward beta-hydroxyamino acids, producing glycine and aldehydes, via a retro-aldol mechanism. The polypeptide is Serine hydroxymethyltransferase (Herminiimonas arsenicoxydans).